Here is a 487-residue protein sequence, read N- to C-terminus: Probable cytosol aminopeptidase (487 aa).

Mn(2+) contacts are provided by lysine 253 and aspartate 258. The active site involves lysine 265. Residues aspartate 277, aspartate 337, and glutamate 339 each coordinate Mn(2+). Arginine 341 is a catalytic residue.

The protein belongs to the peptidase M17 family. Mn(2+) serves as cofactor.

The protein localises to the cytoplasm. It carries out the reaction Release of an N-terminal amino acid, Xaa-|-Yaa-, in which Xaa is preferably Leu, but may be other amino acids including Pro although not Arg or Lys, and Yaa may be Pro. Amino acid amides and methyl esters are also readily hydrolyzed, but rates on arylamides are exceedingly low.. The catalysed reaction is Release of an N-terminal amino acid, preferentially leucine, but not glutamic or aspartic acids.. Functionally, presumably involved in the processing and regular turnover of intracellular proteins. Catalyzes the removal of unsubstituted N-terminal amino acids from various peptides. In Parasynechococcus marenigrum (strain WH8102), this protein is Probable cytosol aminopeptidase.